The primary structure comprises 241 residues: Chlorophyll a-b binding protein 6, chloroplastic (241 aa).

Residues 1–35 constitute a chloroplast transit peptide; that stretch reads MASNSLMSCGIAAVYPSLLSSSKSKFVSAGVPLPN. Trp-48 provides a ligand contact to chlorophyll b. Phe-68, Glu-87, and His-90 together coordinate chlorophyll a. Residue Arg-92 coordinates chlorophyll b. A helical membrane pass occupies residues 93-113; that stretch reads WAMLAVPGILVPEALGYGNWV. Chlorophyll a is bound at residue Leu-129. Residues 132 to 152 form a helical membrane-spanning segment; that stretch reads PVPWGTLPTILAIEFLAIAFV. Positions 133, 153, and 156 each coordinate chlorophyll b. Chlorophyll a-binding residues include Lys-190, Glu-191, Asn-194, Arg-196, Gln-208, and His-224. The helical transmembrane segment at 197–217 threads the bilayer; the sequence is LALLAFVGFCVQQSAYPGTGP.

Belongs to the light-harvesting chlorophyll a/b-binding (LHC) protein family. The LHC complex consists of chlorophyll a-b binding proteins. Red-emitting heterodimer with LHCA4. Interacts with LHCA5. Requires Binds at least 14 chlorophylls (8 Chl-a and 6 Chl-b) and carotenoids such as lutein and neoxanthin. as cofactor. Post-translationally, photoregulated by reversible phosphorylation of its threonine residues.

It is found in the plastid. The protein resides in the chloroplast thylakoid membrane. The light-harvesting complex (LHC) functions as a light receptor, it captures and delivers excitation energy to photosystems with which it is closely associated. This is Chlorophyll a-b binding protein 6, chloroplastic from Arabidopsis thaliana (Mouse-ear cress).